Here is a 600-residue protein sequence, read N- to C-terminus: Proline--tRNA ligase (600 aa).

Belongs to the class-II aminoacyl-tRNA synthetase family. ProS type 1 subfamily. In terms of assembly, homodimer.

It is found in the cytoplasm. It catalyses the reaction tRNA(Pro) + L-proline + ATP = L-prolyl-tRNA(Pro) + AMP + diphosphate. Functionally, catalyzes the attachment of proline to tRNA(Pro) in a two-step reaction: proline is first activated by ATP to form Pro-AMP and then transferred to the acceptor end of tRNA(Pro). As ProRS can inadvertently accommodate and process non-cognate amino acids such as alanine and cysteine, to avoid such errors it has two additional distinct editing activities against alanine. One activity is designated as 'pretransfer' editing and involves the tRNA(Pro)-independent hydrolysis of activated Ala-AMP. The other activity is designated 'posttransfer' editing and involves deacylation of mischarged Ala-tRNA(Pro). The misacylated Cys-tRNA(Pro) is not edited by ProRS. The protein is Proline--tRNA ligase of Prochlorococcus marinus (strain AS9601).